We begin with the raw amino-acid sequence, 522 residues long: Lysine--tRNA ligase (522 aa).

A 'HIGH' region motif is present at residues 44–52; sequence PSGLPHIGT. The 'KMSKS' region signature appears at 290–294; sequence KISKS. ATP is bound at residue Lys-293.

It belongs to the class-I aminoacyl-tRNA synthetase family.

It is found in the cytoplasm. The catalysed reaction is tRNA(Lys) + L-lysine + ATP = L-lysyl-tRNA(Lys) + AMP + diphosphate. The sequence is that of Lysine--tRNA ligase from Rickettsia africae (strain ESF-5).